A 480-amino-acid chain; its full sequence is GTPase Der (480 aa).

EngA-type G domains lie at 5–170 (PVVA…PSQE) and 178–351 (LKLA…QSSM). GTP is bound by residues 11–18 (GRPNVGKS), 58–62 (DTGGI), 123–126 (NKVD), 184–191 (GRPNVGKS), 231–235 (DTAGV), and 296–299 (NKWD). One can recognise a KH-like domain in the interval 352-436 (FEVSTNRLTQ…PLNVVFKLNE (85 aa)). Positions 438 to 454 (PYANKSDTPTKAKTQQL) are enriched in polar residues. Positions 438–480 (PYANKSDTPTKAKTQQLRQRERNRAQKFTTKDKPRFTNKDKKR) are disordered. A compositionally biased stretch (basic and acidic residues) spans 455–480 (RQRERNRAQKFTTKDKPRFTNKDKKR).

Belongs to the TRAFAC class TrmE-Era-EngA-EngB-Septin-like GTPase superfamily. EngA (Der) GTPase family. As to quaternary structure, associates with the 50S ribosomal subunit.

GTPase that plays an essential role in the late steps of ribosome biogenesis. The chain is GTPase Der from Psychrobacter cryohalolentis (strain ATCC BAA-1226 / DSM 17306 / VKM B-2378 / K5).